A 596-amino-acid chain; its full sequence is Linalool synthase TPS3, chloroplastic (596 aa).

Residues 1–39 (MISSLNPLFTTHRSGVIAQQFFASSAAASINSVSSLKIA) constitute a chloroplast transit peptide. Residues Arg-308, Asp-345, Asp-349, Arg-486, and Asn-489 each contribute to the (2E)-geranyl diphosphate site. Asp-345 and Asp-349 together coordinate Mg(2+). The DDXXD motif signature appears at 345–349 (DDIYD). Mg(2+) contacts are provided by Asn-489, Thr-493, and Ser-497.

The protein belongs to the terpene synthase family. Tpsb subfamily. Monomer. Requires Mg(2+) as cofactor. Mn(2+) serves as cofactor. Expressed in flowers and fruits.

It is found in the plastid. Its subcellular location is the chloroplast. It catalyses the reaction (2E)-geranyl diphosphate = beta-myrcene + diphosphate. It carries out the reaction (2E)-geranyl diphosphate + H2O = linalool + diphosphate. The catalysed reaction is (2E)-geranyl diphosphate = (Z)-beta-ocimene + diphosphate. The enzyme catalyses (2E)-geranyl diphosphate = (E)-beta-ocimene + diphosphate. It participates in secondary metabolite biosynthesis; terpenoid biosynthesis. Monoterpene synthase (mono-TPS) involved in the biosynthesis of monoterpenes natural products, constituent of coffee beverage aroma. Catalyzes the conversion of (2E)-geranyl diphosphate (GPP) into linalool and beta-myrcene, and, as minor products, cis-ocimene and trans-ocimene. Not able to use geranylgeranyl pyrophosphate (GGPP) and farnesyl pyrophosphate (FPP) as substrates. The sequence is that of Linalool synthase TPS3, chloroplastic from Coffea arabica (Arabian coffee).